A 256-amino-acid polypeptide reads, in one-letter code: Fibroblast growth factor 3 (256 aa).

The first 18 residues, Met1–Glu18, serve as a signal peptide directing secretion. Disordered stretches follow at residues Ala31–Tyr54, Arg151–Arg176, and Leu219–Ile256. Positions Glu238–Ile256 are enriched in basic residues.

This sequence belongs to the heparin-binding growth factors family.

It is found in the secreted. In terms of biological role, plays an important role in the regulation of embryonic development, cell proliferation, and cell differentiation. This is Fibroblast growth factor 3 (fgf3) from Danio rerio (Zebrafish).